The chain runs to 316 residues: 4-hydroxy-3-methylbut-2-enyl diphosphate reductase (316 aa).

Cysteine 12 provides a ligand contact to [4Fe-4S] cluster. 2 residues coordinate (2E)-4-hydroxy-3-methylbut-2-enyl diphosphate: histidine 41 and histidine 74. Dimethylallyl diphosphate-binding residues include histidine 41 and histidine 74. The isopentenyl diphosphate site is built by histidine 41 and histidine 74. Cysteine 96 contacts [4Fe-4S] cluster. Residue histidine 124 coordinates (2E)-4-hydroxy-3-methylbut-2-enyl diphosphate. Histidine 124 contacts dimethylallyl diphosphate. Histidine 124 provides a ligand contact to isopentenyl diphosphate. Glutamate 126 serves as the catalytic Proton donor. Threonine 167 lines the (2E)-4-hydroxy-3-methylbut-2-enyl diphosphate pocket. [4Fe-4S] cluster is bound at residue cysteine 197. (2E)-4-hydroxy-3-methylbut-2-enyl diphosphate contacts are provided by serine 225, serine 226, asparagine 227, and serine 269. Serine 225, serine 226, asparagine 227, and serine 269 together coordinate dimethylallyl diphosphate. Residues serine 225, serine 226, asparagine 227, and serine 269 each coordinate isopentenyl diphosphate.

This sequence belongs to the IspH family. As to quaternary structure, homodimer. Requires [4Fe-4S] cluster as cofactor.

The enzyme catalyses isopentenyl diphosphate + 2 oxidized [2Fe-2S]-[ferredoxin] + H2O = (2E)-4-hydroxy-3-methylbut-2-enyl diphosphate + 2 reduced [2Fe-2S]-[ferredoxin] + 2 H(+). It carries out the reaction dimethylallyl diphosphate + 2 oxidized [2Fe-2S]-[ferredoxin] + H2O = (2E)-4-hydroxy-3-methylbut-2-enyl diphosphate + 2 reduced [2Fe-2S]-[ferredoxin] + 2 H(+). It functions in the pathway isoprenoid biosynthesis; dimethylallyl diphosphate biosynthesis; dimethylallyl diphosphate from (2E)-4-hydroxy-3-methylbutenyl diphosphate: step 1/1. It participates in isoprenoid biosynthesis; isopentenyl diphosphate biosynthesis via DXP pathway; isopentenyl diphosphate from 1-deoxy-D-xylulose 5-phosphate: step 6/6. Functionally, catalyzes the conversion of 1-hydroxy-2-methyl-2-(E)-butenyl 4-diphosphate (HMBPP) into a mixture of isopentenyl diphosphate (IPP) and dimethylallyl diphosphate (DMAPP). Acts in the terminal step of the DOXP/MEP pathway for isoprenoid precursor biosynthesis. The polypeptide is 4-hydroxy-3-methylbut-2-enyl diphosphate reductase (Escherichia coli (strain UTI89 / UPEC)).